The sequence spans 915 residues: Phototropin-2 (915 aa).

Positions 1–10 (MERPRAPPSP) are enriched in pro residues. 2 disordered regions span residues 1 to 62 (MERP…EFQD) and 84 to 118 (DDGI…GAFP). Phosphoserine occurs at positions 9 and 22. The span at 27–43 (NPSSGKETHGSTSSSSK) shows a compositional bias: polar residues. Over residues 93 to 107 (SEVERSKNMSRRSSE) the composition is skewed to basic and acidic residues. The 74-residue stretch at 120–193 (VSQELKTALS…AKIRDCVKNG (74 aa)) folds into the PAS 1 domain. Phosphoserine is present on S121. An FMN-binding site is contributed by N169. C170 bears the S-4a-FMN cysteine mark. FMN is bound by residues R171, Q174, R187, N202, N212, Q233, and K238. The region spanning 194–248 (KSYCGRLLNYKKDGTPFWNLLTVTPIKDDQGNTIKFIGMQVEVSKYTEGVNDKAL) is the PAC 1 domain. A disordered region spans residues 281–344 (HRKSQVQESV…KSSNNRHEDL (64 aa)). 2 stretches are compositionally biased toward polar residues: residues 286–310 (VQES…GRQT) and 325–337 (RVST…LKSS). Phosphoserine is present on S364. A PAS 2 domain is found at 376–449 (QGIDLATTLE…QKIRDAIRDQ (74 aa)). Position 425 (N425) interacts with FMN. C426 bears the S-4a-FMN cysteine mark. FMN contacts are provided by R427, Q430, R443, N458, N468, F470, and Q489. The PAC 2 domain occupies 450–504 (REITVQLINYTKSGKKFWNLFHLQPMRDQKGELQYFIGVQLDGSDHVEPLQNRLS). The 288-residue stretch at 577 to 864 (FKPIKPLGSG…ANEIKQHAFF (288 aa)) folds into the Protein kinase domain. ATP is bound by residues 583–591 (LGSGDTGSV) and K606. Residue D702 is the Proton acceptor of the active site. Positions 720–774 (DFDLSFMTTCTPQLIIPAAPSKRRRSKSQPLPTFVAEPSTQSNSFVGTEEYIAPE) are activation loop.

The protein belongs to the protein kinase superfamily. AGC Ser/Thr protein kinase family. Homodimer. Interacts with PKS1, PKS2, RPT3 and PHOT1. Associates with CBC1 and CBC2. Binds to BHP. FMN serves as cofactor. Autophosphorylated in response to blue light irradiation. Post-translationally, 2 molecules of FMN bind covalently to cysteines after exposure to blue light and are reversed in the dark. In terms of tissue distribution, expressed in leaves, stems and flowers, and to a lower extent in roots. Present in guard cells (at protein level).

The protein localises to the cell membrane. It carries out the reaction L-seryl-[protein] + ATP = O-phospho-L-seryl-[protein] + ADP + H(+). The catalysed reaction is L-threonyl-[protein] + ATP = O-phospho-L-threonyl-[protein] + ADP + H(+). Autophosphorylation is inhibited by staurosporine, but not by tyrphostin 9, sphingosine, GW5074 and BML-265. Protein kinase that acts as a blue light photoreceptor in a signal-transduction pathway for photo-induced movements. Triggers the phosphorylation of AHA1 and AHA2 C-terminal penultimate Thr in guard cells to activate them and induce stomatal opening in response to blue light (BL). Also phosphorylates BLUS1, a kinase involved in stomatal opening. Mediates calcium spiking of extra- and intracellular origins in response to blue light. Involved in hypocotyl phototropism. Contributes to the chloroplast accumulation in low blue light and mediates their translocation (avoidance response) at high fluence. Regulates stomata opening and photomorphogenesis response of leaf tissue. Not involved in hypocotyl elongation inhibition, anthocyanin accumulation or cotyledon opening. The sequence is that of Phototropin-2 from Arabidopsis thaliana (Mouse-ear cress).